We begin with the raw amino-acid sequence, 167 residues long: Cytochrome c-type biogenesis protein CcmE (167 aa).

Residues Met1–Arg7 are Cytoplasmic-facing. A helical; Signal-anchor for type II membrane protein membrane pass occupies residues Leu8–Ala28. Residues Leu29–Lys167 are Periplasmic-facing. Residues His122 and Tyr126 each contribute to the heme site. Residues Lys137–Pro150 are compositionally biased toward basic and acidic residues. Residues Lys137 to Lys167 form a disordered region. Residues Gly151–Asn161 are compositionally biased toward polar residues.

The protein belongs to the CcmE/CycJ family.

The protein resides in the cell inner membrane. Functionally, heme chaperone required for the biogenesis of c-type cytochromes. Transiently binds heme delivered by CcmC and transfers the heme to apo-cytochromes in a process facilitated by CcmF and CcmH. In Rhodopseudomonas palustris (strain ATCC BAA-98 / CGA009), this protein is Cytochrome c-type biogenesis protein CcmE.